A 101-amino-acid polypeptide reads, in one-letter code: Small ribosomal subunit protein uS14 (101 aa).

Residues 1-26 (MAKVSSIKKNESRKKKSQSLHNKRSA) form a disordered region. Positions 11–26 (ESRKKKSQSLHNKRSA) are enriched in basic residues.

It belongs to the universal ribosomal protein uS14 family. In terms of assembly, part of the 30S ribosomal subunit. Contacts proteins S3 and S10.

In terms of biological role, binds 16S rRNA, required for the assembly of 30S particles and may also be responsible for determining the conformation of the 16S rRNA at the A site. The polypeptide is Small ribosomal subunit protein uS14 (Rickettsia felis (strain ATCC VR-1525 / URRWXCal2) (Rickettsia azadi)).